Consider the following 423-residue polypeptide: Adenylosuccinate synthetase (423 aa).

GTP-binding positions include Gly-12 to Lys-18 and Gly-40 to Thr-42. Asp-13 (proton acceptor) is an active-site residue. Mg(2+) contacts are provided by Asp-13 and Gly-40. IMP contacts are provided by residues Asp-13 to Lys-16, Asn-38 to His-41, Thr-128, Arg-142, Gln-223, Thr-238, and Arg-302. His-41 (proton donor) is an active-site residue. Thr-298–Arg-304 contacts substrate. GTP contacts are provided by residues Arg-304, Arg-330–Asp-332, and Cys-412–Gly-414.

It belongs to the adenylosuccinate synthetase family. Homodimer. Mg(2+) serves as cofactor.

It is found in the cytoplasm. It carries out the reaction IMP + L-aspartate + GTP = N(6)-(1,2-dicarboxyethyl)-AMP + GDP + phosphate + 2 H(+). It participates in purine metabolism; AMP biosynthesis via de novo pathway; AMP from IMP: step 1/2. Plays an important role in the de novo pathway of purine nucleotide biosynthesis. Catalyzes the first committed step in the biosynthesis of AMP from IMP. The protein is Adenylosuccinate synthetase of Dehalococcoides mccartyi (strain ATCC BAA-2266 / KCTC 15142 / 195) (Dehalococcoides ethenogenes (strain 195)).